The sequence spans 496 residues: Probable cytosol aminopeptidase (496 aa).

Residues lysine 266 and aspartate 271 each contribute to the Mn(2+) site. Residue lysine 278 is part of the active site. Mn(2+)-binding residues include aspartate 289, aspartate 348, and glutamate 350. Arginine 352 is a catalytic residue.

This sequence belongs to the peptidase M17 family. It depends on Mn(2+) as a cofactor.

It is found in the cytoplasm. It catalyses the reaction Release of an N-terminal amino acid, Xaa-|-Yaa-, in which Xaa is preferably Leu, but may be other amino acids including Pro although not Arg or Lys, and Yaa may be Pro. Amino acid amides and methyl esters are also readily hydrolyzed, but rates on arylamides are exceedingly low.. It carries out the reaction Release of an N-terminal amino acid, preferentially leucine, but not glutamic or aspartic acids.. Functionally, presumably involved in the processing and regular turnover of intracellular proteins. Catalyzes the removal of unsubstituted N-terminal amino acids from various peptides. This Pseudomonas syringae pv. syringae (strain B728a) protein is Probable cytosol aminopeptidase.